The primary structure comprises 498 residues: ATP synthase subunit alpha, chloroplastic (498 aa).

Residue 170–177 (GDRQTGKT) coordinates ATP.

Belongs to the ATPase alpha/beta chains family. In terms of assembly, F-type ATPases have 2 components, CF(1) - the catalytic core - and CF(0) - the membrane proton channel. CF(1) has five subunits: alpha(3), beta(3), gamma(1), delta(1), epsilon(1). CF(0) has four main subunits: a, b, b' and c.

The protein resides in the plastid. It localises to the chloroplast thylakoid membrane. It carries out the reaction ATP + H2O + 4 H(+)(in) = ADP + phosphate + 5 H(+)(out). Its function is as follows. Produces ATP from ADP in the presence of a proton gradient across the membrane. The alpha chain is a regulatory subunit. This is ATP synthase subunit alpha, chloroplastic from Oltmannsiellopsis viridis (Marine flagellate).